A 398-amino-acid chain; its full sequence is Phosphomevalonate dehydratase large subunit (398 aa).

G48, V49, S50, N76, and P77 together coordinate (R)-5-phosphomevalonate. A [4Fe-4S] cluster-binding site is contributed by C116. Residues E136 and S137 each contribute to the (R)-5-phosphomevalonate site. The [4Fe-4S] cluster site is built by C287 and C342. Position 361 (K361) interacts with (R)-5-phosphomevalonate.

This sequence belongs to the AcnX type II large subunit family. As to quaternary structure, heterodimer composed of a large subunit (PMDh-L) and a small subunit (PMDh-S). [4Fe-4S] cluster serves as cofactor.

The catalysed reaction is (R)-5-phosphomevalonate = (2E)-3-methyl-5-phosphooxypent-2-enoate + H2O. The protein operates within isoprenoid biosynthesis; isopentenyl diphosphate biosynthesis via mevalonate pathway. Component of a hydro-lyase that catalyzes the dehydration of mevalonate 5-phosphate (MVA5P) to form trans-anhydromevalonate 5-phosphate (tAHMP). Involved in the archaeal mevalonate (MVA) pathway, which provides fundamental precursors for isoprenoid biosynthesis, such as isopentenyl diphosphate (IPP) and dimethylallyl diphosphate (DMAPP). The protein is Phosphomevalonate dehydratase large subunit of Methanosarcina mazei (strain ATCC BAA-159 / DSM 3647 / Goe1 / Go1 / JCM 11833 / OCM 88) (Methanosarcina frisia).